Consider the following 1327-residue polypeptide: ABC transporter 1 (1327 aa).

6 helical membrane-spanning segments follow: residues 47–67, 100–120, 170–190, 195–215, 228–248, and 276–296; these read LGILAAIASGVPFPLMGIIFG, VYVGIAYFVLVYIYIASWNLF, KVGIVLNSVSFFITAYIIAFV, LGGELVSLTPAYLLMSLVGGY, VAGASSVAMEALSNATIVHAF, and VAVQSGLLYFIAFSANGLAFW. In terms of domain architecture, ABC transmembrane type-1 1 spans 47-326; that stretch reads LGILAAIASG…TTYTVIFLLV (280 aa). N-linked (GlcNAc...) asparagine glycans are attached at residues asparagine 381, asparagine 390, and asparagine 406. The 278-residue stretch at 386–663 folds into the ABC transporter 1 domain; sequence IELNNVSFAF…DGAYAGLVRL (278 aa). 421–428 serves as a coordination point for ATP; that stretch reads GLSGSGKS. Asparagine 463 and asparagine 674 each carry an N-linked (GlcNAc...) asparagine glycan. The next 6 helical transmembrane spans lie at 743-763, 785-805, 859-881, 888-910, 971-991, and 1005-1025; these read FLALTSAFVVGGTYSASAVVF, FYGLMFFILAIIEFFANLGSW, LTGSVVGTIIAILVNLVVAIALS, IALVCLAVVPLMLGAGVMRVITM, LWLAISYGVSNFLYALAYWWG, and FFIVLMALLVSAQLWGQMFTL. The region spanning 743–1031 is the ABC transmembrane type-1 2 domain; the sequence is FLALTSAFVV…MFTLAPDVSR (289 aa). Asparagine 1050 is a glycosylation site (N-linked (GlcNAc...) asparagine). The disordered stretch occupies residues 1054-1081; the sequence is PCQHLKPGNDLEANAEPREKRPDQSQGG. The 240-residue stretch at 1084 to 1323 folds into the ABC transporter 2 domain; it reads VSLNNVKFSY…SESYKINALH (240 aa). 1119-1126 contributes to the ATP binding site; that stretch reads GPSGAGKS.

The protein belongs to the ABC transporter superfamily. ABCB family. Multidrug resistance exporter (TC 3.A.1.201) subfamily.

Its subcellular location is the membrane. ABC transporter; part of the gene cluster that mediates the biosynthesis of hydroxamate-containing siderophores that play a critical role in virulence via intracellular iron acquisition during macrophage infection. Probably involved in the excretion of the extracellular siderophores. The protein is ABC transporter 1 of Ajellomyces capsulatus (Darling's disease fungus).